A 186-amino-acid polypeptide reads, in one-letter code: dCTP deaminase (186 aa).

Residue 107–112 (KSTYAR) participates in dCTP binding. Catalysis depends on Glu-133, which acts as the Proton donor/acceptor. DCTP-binding residues include Gln-152, Tyr-166, and Gln-176.

It belongs to the dCTP deaminase family. Homotrimer.

It catalyses the reaction dCTP + H2O + H(+) = dUTP + NH4(+). It functions in the pathway pyrimidine metabolism; dUMP biosynthesis; dUMP from dCTP (dUTP route): step 1/2. Catalyzes the deamination of dCTP to dUTP. The sequence is that of dCTP deaminase from Campylobacter jejuni subsp. doylei (strain ATCC BAA-1458 / RM4099 / 269.97).